We begin with the raw amino-acid sequence, 113 residues long: Nucleoid-associated protein SYNW0027 (113 aa).

This sequence belongs to the YbaB/EbfC family. Homodimer.

Its subcellular location is the cytoplasm. It localises to the nucleoid. In terms of biological role, binds to DNA and alters its conformation. May be involved in regulation of gene expression, nucleoid organization and DNA protection. This chain is Nucleoid-associated protein SYNW0027, found in Parasynechococcus marenigrum (strain WH8102).